Here is a 383-residue protein sequence, read N- to C-terminus: MAKHLFTSESVSEGHPDKIADQISDAVLDAILAQDPKARVACETYVKTGMVLVGGEVTTSAWVDIEEITRKTVREIGYTHSDMGFDADSCAVLNAIGKQSPDINQGVDRADPAEQGAGDQGLMFGYANNETDVLMPAPITYAHALVKRQSEVRKNGTLPWLRPDAKSQVTFAYDDGKIVGIDAVVLSTQHRDDVSQADLIEGVMETIIKPVLPAQWLNKDTKFFINPTGRFVIGGPVGDCGLTGRKIIVDTYGGMARHGGGAFSGKDPSKVDRSAAYAARYVAKNIVAAGLADRCEIQVSYAIGVAEPTSISIETFGTGKVSEDLLIKLVRQHFELRPYGLTAMLDLARPIYQATAAYGHFGRNEFPWEATDKAEILRADAGL.

An ATP-binding site is contributed by histidine 15. Mg(2+) is bound at residue aspartate 17. A K(+)-binding site is contributed by glutamate 43. Residues glutamate 56 and glutamine 99 each coordinate L-methionine. The interval 99–109 (QSPDINQGVDR) is flexible loop. ATP-binding positions include 164–166 (DAK), 230–231 (RF), aspartate 239, 245–246 (RK), alanine 262, and lysine 266. Aspartate 239 serves as a coordination point for L-methionine. Residue lysine 270 coordinates L-methionine.

It belongs to the AdoMet synthase family. Homotetramer; dimer of dimers. The cofactor is Mg(2+). Requires K(+) as cofactor.

The protein resides in the cytoplasm. It catalyses the reaction L-methionine + ATP + H2O = S-adenosyl-L-methionine + phosphate + diphosphate. Its pathway is amino-acid biosynthesis; S-adenosyl-L-methionine biosynthesis; S-adenosyl-L-methionine from L-methionine: step 1/1. Functionally, catalyzes the formation of S-adenosylmethionine (AdoMet) from methionine and ATP. The overall synthetic reaction is composed of two sequential steps, AdoMet formation and the subsequent tripolyphosphate hydrolysis which occurs prior to release of AdoMet from the enzyme. The protein is S-adenosylmethionine synthase of Shewanella baltica (strain OS155 / ATCC BAA-1091).